Reading from the N-terminus, the 291-residue chain is Ribosomal RNA small subunit methyltransferase A (291 aa).

Positions 33, 35, 60, 81, 111, and 129 each coordinate S-adenosyl-L-methionine.

Belongs to the class I-like SAM-binding methyltransferase superfamily. rRNA adenine N(6)-methyltransferase family. RsmA subfamily.

It is found in the cytoplasm. It carries out the reaction adenosine(1518)/adenosine(1519) in 16S rRNA + 4 S-adenosyl-L-methionine = N(6)-dimethyladenosine(1518)/N(6)-dimethyladenosine(1519) in 16S rRNA + 4 S-adenosyl-L-homocysteine + 4 H(+). Its function is as follows. Specifically dimethylates two adjacent adenosines (A1518 and A1519) in the loop of a conserved hairpin near the 3'-end of 16S rRNA in the 30S particle. May play a critical role in biogenesis of 30S subunits. The protein is Ribosomal RNA small subunit methyltransferase A of Streptomyces griseus subsp. griseus (strain JCM 4626 / CBS 651.72 / NBRC 13350 / KCC S-0626 / ISP 5235).